Consider the following 246-residue polypeptide: Probable transcriptional regulatory protein APJL_1171 (246 aa).

It belongs to the TACO1 family.

It is found in the cytoplasm. This Actinobacillus pleuropneumoniae serotype 3 (strain JL03) protein is Probable transcriptional regulatory protein APJL_1171.